A 425-amino-acid polypeptide reads, in one-letter code: UDP-N-acetylglucosamine 1-carboxyvinyltransferase (425 aa).

Lysine 22–asparagine 23 provides a ligand contact to phosphoenolpyruvate. Arginine 91 serves as a coordination point for UDP-N-acetyl-alpha-D-glucosamine. Cysteine 115 acts as the Proton donor in catalysis. Residue cysteine 115 is modified to 2-(S-cysteinyl)pyruvic acid O-phosphothioketal. UDP-N-acetyl-alpha-D-glucosamine-binding positions include arginine 120 to leucine 124, aspartate 309, and isoleucine 331.

Belongs to the EPSP synthase family. MurA subfamily.

It is found in the cytoplasm. The catalysed reaction is phosphoenolpyruvate + UDP-N-acetyl-alpha-D-glucosamine = UDP-N-acetyl-3-O-(1-carboxyvinyl)-alpha-D-glucosamine + phosphate. It participates in cell wall biogenesis; peptidoglycan biosynthesis. Functionally, cell wall formation. Adds enolpyruvyl to UDP-N-acetylglucosamine. This Akkermansia muciniphila (strain ATCC BAA-835 / DSM 22959 / JCM 33894 / BCRC 81048 / CCUG 64013 / CIP 107961 / Muc) protein is UDP-N-acetylglucosamine 1-carboxyvinyltransferase.